Here is a 360-residue protein sequence, read N- to C-terminus: MPKKILFTGGGTVGHVTLNLILIPKFIKDGWEVHYIGDKNGIEHTEIEKSGLDVTFHAIATGKLRRYFSWQNLADVFKVALGLLQSLFIIAKLRPQALFSKGGFVSVPPVVAAKLLGKPVFIHESDRSMGLANKIAYKFATTMYTTFEQEDQLSKVKHLGAVTKVFKDANQMPESTQLEAVKEYFSRDLKTLLFIGGSAGAHVFNQFISDHPELKQRYNIINITGDPHLNELSSHLYRVDYVTDLYQPLMAMADLVVTRGGSNTLFELLAMAKLHLIVPLGKEASRGDQLENATYFEKRGYAKQLQEPDLTLHNFDQAMADLFEHQADYEATMLATKEIQSPDFFYDLLRADISSAIKEK.

Residues serine 198 and glutamine 289 each contribute to the UDP-N-acetyl-alpha-D-glucosamine site.

It belongs to the glycosyltransferase 28 family. MurG subfamily.

The protein resides in the cell membrane. It carries out the reaction Mur2Ac(oyl-L-Ala-gamma-D-Glu-L-Lys-D-Ala-D-Ala)-di-trans,octa-cis-undecaprenyl diphosphate + UDP-N-acetyl-alpha-D-glucosamine = beta-D-GlcNAc-(1-&gt;4)-Mur2Ac(oyl-L-Ala-gamma-D-Glu-L-Lys-D-Ala-D-Ala)-di-trans,octa-cis-undecaprenyl diphosphate + UDP + H(+). It participates in cell wall biogenesis; peptidoglycan biosynthesis. Cell wall formation. Catalyzes the transfer of a GlcNAc subunit on undecaprenyl-pyrophosphoryl-MurNAc-pentapeptide (lipid intermediate I) to form undecaprenyl-pyrophosphoryl-MurNAc-(pentapeptide)GlcNAc (lipid intermediate II). This chain is UDP-N-acetylglucosamine--N-acetylmuramyl-(pentapeptide) pyrophosphoryl-undecaprenol N-acetylglucosamine transferase, found in Streptococcus pyogenes serotype M12 (strain MGAS2096).